The chain runs to 483 residues: Glutamyl-tRNA(Gln) amidotransferase subunit A (483 aa).

Residues K76 and S151 each act as charge relay system in the active site. Residue S175 is the Acyl-ester intermediate of the active site.

It belongs to the amidase family. GatA subfamily. Heterotrimer of A, B and C subunits.

The enzyme catalyses L-glutamyl-tRNA(Gln) + L-glutamine + ATP + H2O = L-glutaminyl-tRNA(Gln) + L-glutamate + ADP + phosphate + H(+). In terms of biological role, allows the formation of correctly charged Gln-tRNA(Gln) through the transamidation of misacylated Glu-tRNA(Gln) in organisms which lack glutaminyl-tRNA synthetase. The reaction takes place in the presence of glutamine and ATP through an activated gamma-phospho-Glu-tRNA(Gln). The protein is Glutamyl-tRNA(Gln) amidotransferase subunit A of Nitrosococcus oceani (strain ATCC 19707 / BCRC 17464 / JCM 30415 / NCIMB 11848 / C-107).